The sequence spans 245 residues: Adenosylcobinamide-GDP ribazoletransferase (245 aa).

Transmembrane regions (helical) follow at residues 31–51 (FGRAVLCYPLVGVLIGVVLYA), 61–81 (PLLQAALLLSLWVALSGALHL), 113–133 (VAVVVLVLVLLLKFSALAALL), 138–158 (AGLLPLAPWLARSSLPLLFLT), and 192–212 (LAFGLAGLLALLVTLMLFAWL).

This sequence belongs to the CobS family. Mg(2+) serves as cofactor.

The protein localises to the cell inner membrane. It catalyses the reaction alpha-ribazole + adenosylcob(III)inamide-GDP = adenosylcob(III)alamin + GMP + H(+). The catalysed reaction is alpha-ribazole 5'-phosphate + adenosylcob(III)inamide-GDP = adenosylcob(III)alamin 5'-phosphate + GMP + H(+). The protein operates within cofactor biosynthesis; adenosylcobalamin biosynthesis; adenosylcobalamin from cob(II)yrinate a,c-diamide: step 7/7. Its function is as follows. Joins adenosylcobinamide-GDP and alpha-ribazole to generate adenosylcobalamin (Ado-cobalamin). Also synthesizes adenosylcobalamin 5'-phosphate from adenosylcobinamide-GDP and alpha-ribazole 5'-phosphate. The polypeptide is Adenosylcobinamide-GDP ribazoletransferase (Pseudomonas aeruginosa (strain UCBPP-PA14)).